The sequence spans 91 residues: Small ribosomal subunit protein bS20 (91 aa).

Over residues 1–21 (MPLHKSAEKRLRQAARRNERN) the composition is skewed to basic and acidic residues. The interval 1–24 (MPLHKSAEKRLRQAARRNERNRAR) is disordered.

This sequence belongs to the bacterial ribosomal protein bS20 family.

Its function is as follows. Binds directly to 16S ribosomal RNA. The sequence is that of Small ribosomal subunit protein bS20 from Chlorobaculum parvum (strain DSM 263 / NCIMB 8327) (Chlorobium vibrioforme subsp. thiosulfatophilum).